We begin with the raw amino-acid sequence, 704 residues long: Phosphatidylinositol-3,5-bisphosphate 3-phosphatase MTMR8 (704 aa).

Residues 126 to 500 form the Myotubularin phosphatase domain; that stretch reads GWKLIDPISD…YNIQFWCGMY (375 aa). A 1,2-diacyl-sn-glycero-3-phospho-(1D-myo-inositol-3,5-bisphosphate) is bound by residues Asn250, Asn275, and Ile276. Positions 250, 275, and 276 each coordinate a 1,2-diacyl-sn-glycero-3-phospho-(1D-myo-inositol-3-phosphate). The active-site Phosphocysteine intermediate is the Cys338. A 1,2-diacyl-sn-glycero-3-phospho-(1D-myo-inositol-3,5-bisphosphate)-binding residues include Ser339, Asp340, Gly341, Trp342, Asp343, Arg344, Lys380, and Arg384. 6 residues coordinate a 1,2-diacyl-sn-glycero-3-phospho-(1D-myo-inositol-3-phosphate): Ser339, Asp340, Gly341, Trp342, Asp343, and Arg344. Residues Ser339 and Asp340 each coordinate phosphate. Phosphate-binding residues include Trp342, Asp343, and Arg344. Arg384 serves as a coordination point for a 1,2-diacyl-sn-glycero-3-phospho-(1D-myo-inositol-3-phosphate). The stretch at 515 to 541 forms a coiled coil; that stretch reads ESLLEIKKQRAMLETDVHELEKKLKVR.

It belongs to the protein-tyrosine phosphatase family. Non-receptor class myotubularin subfamily. As to quaternary structure, homodimer. Heterodimer with MTMR9.

It localises to the nucleus envelope. The catalysed reaction is a 1,2-diacyl-sn-glycero-3-phospho-(1D-myo-inositol-3,5-bisphosphate) + H2O = a 1,2-diacyl-sn-glycero-3-phospho-(1D-myo-inositol-5-phosphate) + phosphate. It carries out the reaction a 1,2-diacyl-sn-glycero-3-phospho-(1D-myo-inositol-3-phosphate) + H2O = a 1,2-diacyl-sn-glycero-3-phospho-(1D-myo-inositol) + phosphate. It catalyses the reaction 1,2-dioctanoyl-sn-glycero-3-phospho-(1D-myo-inositol-3,5-bisphosphate) + H2O = 1,2-dioctanoyl-sn-glycero-3-phospho-(1D-myo-inositol-5-phosphate) + phosphate. Interaction with MTMR9 increases phosphatase activity. Functionally, lipid phosphatase that specifically dephosphorylates the D-3 position of phosphatidylinositol 3-phosphate and phosphatidylinositol 3,5-bisphosphate, generating phosphatidylinositol and phosphatidylinositol 5-phosphate. In complex with MTMR9, negatively regulates autophagy. This chain is Phosphatidylinositol-3,5-bisphosphate 3-phosphatase MTMR8, found in Homo sapiens (Human).